Consider the following 102-residue polypeptide: Small ribosomal subunit protein uS10 (102 aa).

This sequence belongs to the universal ribosomal protein uS10 family. Part of the 30S ribosomal subunit.

In terms of biological role, involved in the binding of tRNA to the ribosomes. This chain is Small ribosomal subunit protein uS10, found in Methanosphaerula palustris (strain ATCC BAA-1556 / DSM 19958 / E1-9c).